A 274-amino-acid polypeptide reads, in one-letter code: MDPILLLKALILGIVEGLTEFLPISSTGHLILAGDLLNFNDDRGKLFEIVIQSGAILAVVWEYRERLLKVARGAFSEPAAQKFILNLFVAFLPLAILGLAFGRAIKAHLFNPVTVASTFILGAFVILWAERREHKIRIQTVDEMSMLDALKLGIAQAFALIPGTSRSGATIIGGLLFGLSRKAATEFSFFLAIPTLIVATFYQLYKERALLNADDLAMWAVGFVAAFVSAFLCVRWLLRYISTHDFTAFAWYRIAFGIVVLATWQFGWVQWAAD.

Transmembrane regions (helical) follow at residues 4–24 (ILLL…FLPI), 46–63 (LFEI…VWEY), 82–102 (KFIL…LAFG), 109–129 (LFNP…ILWA), 184–204 (ATEF…FYQL), 218–238 (MWAV…RWLL), and 249–269 (FAWY…FGWV).

This sequence belongs to the UppP family.

Its subcellular location is the cell inner membrane. It carries out the reaction di-trans,octa-cis-undecaprenyl diphosphate + H2O = di-trans,octa-cis-undecaprenyl phosphate + phosphate + H(+). Catalyzes the dephosphorylation of undecaprenyl diphosphate (UPP). Confers resistance to bacitracin. The chain is Undecaprenyl-diphosphatase from Dechloromonas aromatica (strain RCB).